Reading from the N-terminus, the 595-residue chain is Chaperone protein HscA homolog (595 aa).

Belongs to the heat shock protein 70 family.

Chaperone involved in the maturation of iron-sulfur cluster-containing proteins. Has a low intrinsic ATPase activity which is markedly stimulated by HscB. The polypeptide is Chaperone protein HscA homolog (Rickettsia peacockii (strain Rustic)).